The chain runs to 253 residues: tRNA (guanine-N(1)-)-methyltransferase (253 aa).

S-adenosyl-L-methionine-binding positions include glycine 113 and 133–138 (IGDYVL).

This sequence belongs to the RNA methyltransferase TrmD family. As to quaternary structure, homodimer.

It is found in the cytoplasm. The catalysed reaction is guanosine(37) in tRNA + S-adenosyl-L-methionine = N(1)-methylguanosine(37) in tRNA + S-adenosyl-L-homocysteine + H(+). In terms of biological role, specifically methylates guanosine-37 in various tRNAs. In Chloroflexus aurantiacus (strain ATCC 29366 / DSM 635 / J-10-fl), this protein is tRNA (guanine-N(1)-)-methyltransferase.